A 727-amino-acid polypeptide reads, in one-letter code: Plakophilin-1 (727 aa).

A required for binding to single stranded DNA region spans residues 1–235 (MNHSPLKTAL…SFSHSRASSK (235 aa)). Residues 1-287 (MNHSPLKTAL…ESAKQQVYQL (287 aa)) form a required for interaction with EIF4A1 region. Phosphoserine is present on Ser-4. Residues 48–69 (TVKRQKSKSSQSSTLSHSNRGS) form a disordered region. 2 phosphorylation in this region is required for cytoplasmic localization and protein stabilization regions span residues 54–69 (SKSSQSSTLSHSNRGS) and 117–192 (RFSS…STCS). 4 positions are modified to phosphoserine: Ser-119, Ser-120, Ser-122, and Ser-143. Residues 161 to 270 (YCDPRGTLRK…KCQAIGAYYI (110 aa)) form a required for WNT-mediated nuclear localization region. 9 ARM repeats span residues 244–275 (SGLTIPKAVQYLSSQDEKCQAIGAYYIQHTCF), 276–317 (QDES…NLVF), 318–360 (RSTT…NLSS), 361–412 (TDEL…GCLR), 413–443 (NLSSADVGRQTMRNYTGLIDSLMAYVQNCVA), 505–536 (NYDCPLPEEEPNPKGSSWLYHSDAVRTYLNLM), 537–583 (GKSK…IARL), 584–629 (LQSG…SHTG), and 630–693 (NTSN…DMWS).

Belongs to the beta-catenin family. Part of a complex that contains DSG3, PKP1, YAP1 and YWHAG; the complex is required for localization of DSG3 and YAP1 to the cell membrane in keratinocytes. Interacts (via N-terminus) with KRT5/CK5, KRT8/CK8 (via rod domain), KRT15/CK15 and KRT18/CK18 (via rod domain) as part of intermediate filaments. Interacts with VIM (via rod domain). Interacts with DSP. Interacts with DES. Interacts with FXR1; the interaction may facilitate the binding of PKP1 to PKP2, PKP3 and DSP mRNA. Interacts (via N-terminus) with EIF4A1; the interaction promotes EIF4A1 recruitment to the cap-dependent translation complex and EIF4A1 ATPase activity. Interacts with TJP1/ZO-1; the interaction facilitates TJP1/ZO-1 localization to the plasma membrane. Interacts (when phosphorylated) with YWHAG; the interaction results in translocation of PKP1 to the cytoplasm and loss of intercellular adhesion in keratinocytes. In terms of processing, phosphorylated by AKT2; required for interaction with YWHAG and subsequent localization away from desmosomes to the cytoplasm. Phosphorylation of Ser-119 by AKT2 promotes PKP1-driven cap-dependent mRNA translation and decreases intercellular adhesion, phosphorylation is promoted by insulin. Phosphorylation by RIPK4 at the N-terminus is required for its role in differentiation of keratinocytes and DSG1 localization at cell junctions.

It localises to the nucleus. It is found in the cytoplasm. The protein localises to the perinuclear region. The protein resides in the cell junction. Its subcellular location is the desmosome. It localises to the cell membrane. It is found in the stress granule. Functionally, a component of desmosome cell-cell junctions which are required for positive regulation of cellular adhesion. Plays a role in desmosome protein expression regulation and localization to the desmosomal plaque, thereby maintaining cell sheet integrity and anchorage of desmosomes to intermediate filaments. Required for localization of DSG3 and YAP1 to the cell membrane in keratinocytes in response to mechanical strain, via the formation of an interaction complex composed of DSG3, YAP1, PKP1 and YWHAG. Positively regulates differentiation of keratinocytes, potentially via promoting localization of DSG1 at desmosome cell junctions. Required for calcium-independent development and maturation of desmosome plaques specifically at lateral cell-cell contacts in differentiating keratinocytes. Plays a role in the maintenance of DSG3 protein abundance, DSG3 clustering and localization of these clusters to the cell membrane in keratinocytes. May also promote keratinocyte proliferation and morphogenesis during postnatal development. Required for tight junction inside-out transepidermal barrier function of the skin. Promotes Wnt-mediated proliferation and differentiation of ameloblasts, via facilitating TJP1/ZO-1 localization to tight junctions. Binds single-stranded DNA (ssDNA), and may thereby play a role in sensing DNA damage and promoting cell survival. Positively regulates cap-dependent translation and as a result cell proliferation, via recruitment of EIF4A1 to the initiation complex and promotion of EIF4A1 ATPase activity. Regulates the mRNA stability and protein abundance of desmosome components PKP2, PKP3, DSC2 and DSP, potentially via its interaction with FXR1. May facilitate the formation of intermediate filaments. This chain is Plakophilin-1 (PKP1), found in Bos taurus (Bovine).